Reading from the N-terminus, the 292-residue chain is Fat storage-inducing transmembrane protein 1 (292 aa).

At 1 to 18 (MERGPVVGAGLGAGARIQ) the chain is on the lumenal side. The chain crosses the membrane as a helical span at residues 19 to 39 (ALLGCLLKVLLWVASALLYFG). Topologically, residues 40–54 (SEQAARLLGSPCLRR) are cytoplasmic. The helical transmembrane segment at 55–75 (LYHAWLAAVVIFGPLLQFHVN) threads the bilayer. Residues 76-94 (PRTIFASHGNFFNIKFVNS) lie on the Lumenal side of the membrane. The helical transmembrane segment at 95-115 (AWGWTCTFLGGFVLLVVFLAT) threads the bilayer. At 116–141 (RRVAVTARHLSRLVVGAAVWRGAGRA) the chain is on the cytoplasmic side. A helical membrane pass occupies residues 142–162 (FLLIEDLTGSCFEPLPQGLLL). Topologically, residues 163–187 (HELPDRRSCLAAGHQWRGYTVSSHT) are lumenal. His186 is an active-site residue. The chain crosses the membrane as a helical span at residues 188 to 208 (FLLTFCCLLMAEEAAVFAKYL). Over 209-220 (AHGLPAGAPLRL) the chain is Cytoplasmic. Residues 221-241 (VFLLNVLLLGLWNFLLLCTVI) form a helical membrane-spanning segment. Over 242-249 (YFHQYTHK) the chain is Lumenal. The active site involves His244. The chain crosses the membrane as a helical span at residues 250–270 (VVGAAVGTFAWYLTYGSWYHQ). Residues 271–292 (PWSPGSPGHGLFPRPHSSRKHN) lie on the Cytoplasmic side of the membrane.

The protein belongs to the FIT family. FIT1 subfamily. Primarily expressed in heart and skeletal muscle.

It is found in the endoplasmic reticulum membrane. Functionally, plays an important role in the formation of lipid droplets (LDs) which are storage organelles at the center of lipid and energy homeostasis. Directly binds to diacylglycerol (DAGs) and triacylglycerol. This chain is Fat storage-inducing transmembrane protein 1, found in Homo sapiens (Human).